An 89-amino-acid chain; its full sequence is Small ribosomal subunit protein uS15 (89 aa).

A compositionally biased stretch (basic and acidic residues) spans 1–21 (MAITQERKNQLISEFKTHESD). The segment at 1 to 23 (MAITQERKNQLISEFKTHESDTG) is disordered.

The protein belongs to the universal ribosomal protein uS15 family. In terms of assembly, part of the 30S ribosomal subunit. Forms a bridge to the 50S subunit in the 70S ribosome, contacting the 23S rRNA.

Its function is as follows. One of the primary rRNA binding proteins, it binds directly to 16S rRNA where it helps nucleate assembly of the platform of the 30S subunit by binding and bridging several RNA helices of the 16S rRNA. In terms of biological role, forms an intersubunit bridge (bridge B4) with the 23S rRNA of the 50S subunit in the ribosome. The protein is Small ribosomal subunit protein uS15 of Bacillus velezensis (strain DSM 23117 / BGSC 10A6 / LMG 26770 / FZB42) (Bacillus amyloliquefaciens subsp. plantarum).